The primary structure comprises 228 residues: UPF0173 metal-dependent hydrolase Lm4b_01588 (228 aa).

The protein belongs to the UPF0173 family.

In Listeria monocytogenes serotype 4b (strain CLIP80459), this protein is UPF0173 metal-dependent hydrolase Lm4b_01588.